We begin with the raw amino-acid sequence, 580 residues long: uncharacterized protein (580 aa).

Positions 300-525 (PGYTATFLET…LRVLVELGYD (226 aa)) constitute a PE-PPE domain.

This sequence belongs to the mycobacterial PPE family.

This is an uncharacterized protein from Mycobacterium tuberculosis (strain CDC 1551 / Oshkosh).